Here is a 962-residue protein sequence, read N- to C-terminus: Nonsense-mediated mRNA decay factor SMG8 (962 aa).

Residues 634-661 (RSPEISSQIASSGLSSRSNSTSSGTSSA) are disordered. The segment covering 639 to 661 (SSQIASSGLSSRSNSTSSGTSSA) has biased composition (low complexity).

It belongs to the SMG8 family.

In terms of biological role, involved in nonsense-mediated decay (NMD) of mRNAs containing premature stop codons. Probable component of kinase complex containing nonC and recruited to stalled ribosomes. The chain is Nonsense-mediated mRNA decay factor SMG8 from Drosophila virilis (Fruit fly).